The chain runs to 100 residues: Ribosomal biogenesis factor (100 aa).

The residue at position 19 (Ser-19) is a Phosphoserine. The residue at position 21 (Lys-21) is an N6-acetyllysine. Ser-69 carries the phosphoserine modification.

As to quaternary structure, associates with the pre-60S ribosomal particles.

It localises to the nucleus. The protein localises to the nucleolus. Its function is as follows. Trans-acting factor in ribosome biogenesis required for efficient 40S and 60S subunit production. The chain is Ribosomal biogenesis factor (RBIS) from Bos taurus (Bovine).